Here is a 278-residue protein sequence, read N- to C-terminus: Probable F-box protein At1g14315 (278 aa).

In terms of domain architecture, F-box spans M1–K43.

In Arabidopsis thaliana (Mouse-ear cress), this protein is Probable F-box protein At1g14315.